The chain runs to 230 residues: Cytochrome b6-f complex iron-sulfur subunit, chloroplastic (230 aa).

The transit peptide at 1–50 (MSSTTLSPTTPSQLCSGKSGISCPSIALLVKPTRTQMTGRGNKGMKITCQ) directs the protein to the chloroplast. The chain crosses the membrane as a helical span at residues 72–92 (LLGALSLPTAGMLVPYGSFLV). The Rieske domain maps to 115-213 (ATEWLKTHAP…VGVEDGKVVF (99 aa)). [2Fe-2S] cluster-binding residues include C157, H159, C175, and H178. Residues C162 and C177 are joined by a disulfide bond.

Belongs to the Rieske iron-sulfur protein family. As to quaternary structure, the 4 large subunits of the cytochrome b6-f complex are cytochrome b6, subunit IV (17 kDa polypeptide, petD), cytochrome f and the Rieske protein, while the 4 small subunits are petG, petL, petM and petN. The complex functions as a dimer. [2Fe-2S] cluster serves as cofactor.

It localises to the plastid. Its subcellular location is the chloroplast thylakoid membrane. It catalyses the reaction 2 oxidized [plastocyanin] + a plastoquinol + 2 H(+)(in) = 2 reduced [plastocyanin] + a plastoquinone + 4 H(+)(out). In terms of biological role, component of the cytochrome b6-f complex, which mediates electron transfer between photosystem II (PSII) and photosystem I (PSI), cyclic electron flow around PSI, and state transitions. The chain is Cytochrome b6-f complex iron-sulfur subunit, chloroplastic (petC) from Pisum sativum (Garden pea).